Consider the following 118-residue polypeptide: MATESSPLTTHVLDTASGLPAQGLCLRLSRLEAPCQQWMELRTSYTNLDGRCPGLLTPSQIKPGTYKLFFDTERYWKERGQESFYPYVEVVFTITKETQKFHVPLLLSPWSYTTYRGS.

Residues H11, R51, and Y115 each contribute to the substrate site.

It belongs to the transthyretin family. 5-hydroxyisourate hydrolase subfamily. In terms of assembly, homotetramer.

It is found in the peroxisome. The enzyme catalyses 5-hydroxyisourate + H2O = 5-hydroxy-2-oxo-4-ureido-2,5-dihydro-1H-imidazole-5-carboxylate + H(+). It functions in the pathway purine metabolism; urate degradation; (S)-allantoin from urate: step 2/3. Its function is as follows. Catalyzes the hydrolysis of 5-hydroxyisourate (HIU) to 2-oxo-4-hydroxy-4-carboxy-5-ureidoimidazoline (OHCU). This chain is 5-hydroxyisourate hydrolase (Urah), found in Mus musculus (Mouse).